Consider the following 107-residue polypeptide: Anti-adapter protein IraM (107 aa).

Belongs to the IraM/RssC family.

It is found in the cytoplasm. In terms of biological role, inhibits RpoS proteolysis by regulating RssB activity, thereby increasing the stability of the sigma stress factor RpoS during magnesium starvation. The polypeptide is Anti-adapter protein IraM (Escherichia coli O7:K1 (strain IAI39 / ExPEC)).